The primary structure comprises 473 residues: MAKEALELKNEANKFLKEGHIVQAIDLYTKAIELDSTNAILYSNRSLAHLKSEDYGLAINDASKAIECDPEYAKAYFRRATAHIAIFQPKEAVGDFRKALALAPSDPAARKKLRECEQLVKRIRFQEAIHNTEPPSPLANINIEDMDIPSDYDGVILEKQITKEFVEDMKERFCQGKKLPLKFAYSILRDLKELLEKTPSLIDIPVKGDETLVICGDTHGQYFDLLNIFKLHGPPSPTNKYLFNGDFVDRGSWSTEVAFTLYAYKLLYPDAVFINRGNHETDDMNKVYGFEGECRSKYNERTFNIFSETFSLLPLGSLISDSYLVVHGGLFSDDNVTLDQLRNIDRFSKKQPGQSGLMMEMLWTDPQPAPGRGPSKRGVGLQFGPDVSKRFCEANGLKAVIRSHEVRDQGYEVEHDGYCITVFSAPNYCDSTGNLGAVIKVKEDMELDFHQFEAVPHPNIRPMAYANGLLSGM.

TPR repeat units follow at residues 5–38 (ALELKNEANKFLKEGHIVQAIDLYTKAIELDSTN), 40–72 (ILYSNRSLAHLKSEDYGLAINDASKAIECDPEY), and 73–106 (AKAYFRRATAHIAIFQPKEAVGDFRKALALAPSD). Residues 159 to 472 (KQITKEFVED…MAYANGLLSG (314 aa)) are catalytic. D217, H219, D246, and N278 together coordinate Mn(2+). The active-site Proton donor/acceptor is the H279. Residues H327 and H404 each contribute to the Mn(2+) site.

Belongs to the PPP phosphatase family. PP-5 (PP-T) subfamily. The cofactor is Mg(2+). Mn(2+) is required as a cofactor.

Its subcellular location is the nucleus. The enzyme catalyses O-phospho-L-seryl-[protein] + H2O = L-seryl-[protein] + phosphate. It catalyses the reaction O-phospho-L-threonyl-[protein] + H2O = L-threonyl-[protein] + phosphate. Functionally, protein phosphatase that specifically binds to and dephosphorylates the molecular chaperone Hsp90. Dephosphorylation positively regulates the Hsp90 chaperone machinery. In Schizosaccharomyces pombe (strain 972 / ATCC 24843) (Fission yeast), this protein is Serine/threonine-protein phosphatase T (ppt1).